Here is a 772-residue protein sequence, read N- to C-terminus: Annulin (772 aa).

Residues C4 and C5 are each lipidated (S-palmitoyl cysteine). The interval 15 to 57 (NEGSGGGIPLMPVRGGSTRRPDSLPKPPAAVVPSPPSPGDVPD) is disordered. Residues 38-53 (LPKPPAAVVPSPPSPG) show a composition bias toward pro residues. Residues H400 and D427 contribute to the active site. Positions 467, 469, 517, and 522 each coordinate Ca(2+).

This sequence belongs to the transglutaminase superfamily. Transglutaminase family. Ca(2+) is required as a cofactor. Has an annular, or ring-like expression pattern in epithelial annuli of developing limb segment boundary cells. In embryos, it is seen in gastrulating cells, in cells surrounding rapidly dividing neuroblasts, and in muscle pioneer cells invaginating to form apodemes.

Its subcellular location is the cell membrane. It carries out the reaction L-glutaminyl-[protein] + L-lysyl-[protein] = [protein]-L-lysyl-N(6)-5-L-glutamyl-[protein] + NH4(+). Participates in morphogenetic activities of the cells, maybe by stabilizing the membrane or subcortical structures of cells that are under mechanical stress. Probably catalyzes the cross-linking of proteins and the conjugation of polyamines to proteins. The chain is Annulin from Schistocerca americana (American grasshopper).